The primary structure comprises 275 residues: Two-component response regulator PprB (275 aa).

Positions 10 to 128 constitute a Response regulatory domain; that stretch reads SVLIIDDEPQ…ELLHGLERLE (119 aa). The residue at position 60 (Asp-60) is a 4-aspartylphosphate. Residues 173–205 are disordered; it reads SQPSALRSEDSQPSAPPAPVAESQVSPSNPLFG. The HTH luxR-type domain occupies 200-265; it reads SNPLFGKLSP…QLALALSPAA (66 aa). The segment at residues 224–243 is a DNA-binding region (H-T-H motif); sequence NYQIAYELGITENTVKLYVS.

Phosphorylated by PprA.

In terms of biological role, member of the two-component regulatory system PprA/PprB involved in biofilm formation by controlling the expression of many related genes including type IVb pili major subunit flp pilin, adhesin bapA or cupE fimbriae. Functions as a transcription regulator by direct binding to promoter regions. Negatively regulates its own transcription. In Pseudomonas aeruginosa (strain ATCC 15692 / DSM 22644 / CIP 104116 / JCM 14847 / LMG 12228 / 1C / PRS 101 / PAO1), this protein is Two-component response regulator PprB.